An 87-amino-acid chain; its full sequence is U3-theraphotoxin-Hhn1a 15 (87 aa).

The N-terminal stretch at 1–24 (MVNMKASMFLTFAGLVLLLVVCYA) is a signal peptide. Positions 25–52 (SESEEKEFPKEMLSSIFAVDNDFKQEER) are excised as a propeptide. 3 disulfide bridges follow: Cys54-Cys67, Cys61-Cys72, and Cys66-Cys79.

The protein belongs to the neurotoxin 10 (Hwtx-1) family. 51 (Hntx-8) subfamily. Hntx-8 sub-subfamily. As to expression, expressed by the venom gland.

The protein resides in the secreted. In terms of biological role, ion channel inhibitor. This chain is U3-theraphotoxin-Hhn1a 15, found in Cyriopagopus hainanus (Chinese bird spider).